The sequence spans 365 residues: Putative F-box/kelch-repeat protein At4g39290 (365 aa).

The F-box domain maps to 10–58 (QMTFSMLPDDLVLNCLARVSKVYYPSLSFVSKKFRSLIASTELQELRSF). Kelch repeat units lie at residues 118–165 (DIYA…CVLN) and 167–213 (KIYV…KIVG).

The sequence is that of Putative F-box/kelch-repeat protein At4g39290 from Arabidopsis thaliana (Mouse-ear cress).